Consider the following 285-residue polypeptide: Meiotically up-regulated gene 125 protein (285 aa).

It is found in the cytoplasm. Its subcellular location is the nucleus. Its function is as follows. Has a role in meiosis. This is Meiotically up-regulated gene 125 protein (mug125) from Schizosaccharomyces pombe (strain 972 / ATCC 24843) (Fission yeast).